The chain runs to 70 residues: Large ribosomal subunit protein bL31 (70 aa).

Lys-8 carries the N6-acetyllysine modification. Cys-16, Cys-18, Cys-37, and Cys-40 together coordinate Zn(2+).

Belongs to the bacterial ribosomal protein bL31 family. Type A subfamily. As to quaternary structure, part of the 50S ribosomal subunit. Requires Zn(2+) as cofactor.

In terms of biological role, binds the 23S rRNA. In Escherichia coli O6:K15:H31 (strain 536 / UPEC), this protein is Large ribosomal subunit protein bL31.